Consider the following 219-residue polypeptide: MASLKSIIRQGKQTRSDLKQLRNSGKVPAVVYGYGTKNTSVKVDEVEFIKVIREVGRNGVIDLGVGSKTIKVMVSDYQFDPLKNQITHIDFLAINMSEERTVEVQVQLVGEAVGAKEGGVVEQPLFNLEVTATPENIPETIEVDISELQVNDSLAVSDIKISGDFTIENNPEDSIVTVVPPTDEPSEEEVEAMEGESATEEPEVVGEDKEDDEEENKED.

Residues 176 to 219 (VTVVPPTDEPSEEEVEAMEGESATEEPEVVGEDKEDDEEENKED) form a disordered region. Residues 184 to 219 (EPSEEEVEAMEGESATEEPEVVGEDKEDDEEENKED) show a composition bias toward acidic residues.

Belongs to the bacterial ribosomal protein bL25 family. CTC subfamily. Part of the 50S ribosomal subunit; part of the 5S rRNA/L5/L18/L25 subcomplex. Contacts the 5S rRNA. Binds to the 5S rRNA independently of L5 and L18.

In terms of biological role, this is one of the proteins that binds to the 5S RNA in the ribosome where it forms part of the central protuberance. The chain is Large ribosomal subunit protein bL25 from Staphylococcus epidermidis (strain ATCC 35984 / DSM 28319 / BCRC 17069 / CCUG 31568 / BM 3577 / RP62A).